A 502-amino-acid chain; its full sequence is Xyloglucan-specific endo-beta-1,4-glucanase BoGH5A (502 aa).

Positions 1–32 (MEKQSFSDGLFSPLGIKRVIFMLVLLTTSFIS) are cleaved as a signal peptide. Residue cysteine 33 is the site of N-palmitoyl cysteine attachment. Cysteine 33 carries S-diacylglycerol cysteine lipidation. In terms of domain architecture, BACON spans 67-127 (GPAEWHISTS…PDIIINVKQS (61 aa)). 4 residues coordinate substrate: asparagine 165, valine 172, histidine 251, and asparagine 296. Glutamate 297 (proton donor) is an active-site residue. Residue glutamate 430 is the Nucleophile of the active site. Tryptophan 472 serves as a coordination point for substrate.

The protein belongs to the glycosyl hydrolase 5 (cellulase A) family.

The protein localises to the cell outer membrane. The catalysed reaction is xyloglucan + H2O = xyloglucan oligosaccharides.. The protein operates within glucan metabolism; xyloglucan degradation. Catalyzes endohydrolysis of 1,4-beta-D-glucosidic linkages in xyloglucan with retention of the beta-configuration of the glycosyl residues in xyloglucan degradation. Cleaves the backbone of the 3 major types of natural xyloglucans (seed galactoxyloglucan from tamarind kernel, dicot fucogalactoxyloglucan from lettuce leaves, and solanaceous arabinogalactoxyloglucan from tomato fruit), to produce xyloglucan oligosaccharides. This Bacteroides ovatus (strain ATCC 8483 / DSM 1896 / JCM 5824 / BCRC 10623 / CCUG 4943 / NCTC 11153) protein is Xyloglucan-specific endo-beta-1,4-glucanase BoGH5A.